Reading from the N-terminus, the 407-residue chain is Phosphopentomutase (407 aa).

Mn(2+)-binding residues include Asp10, Asp306, His311, Asp347, His348, and His359.

This sequence belongs to the phosphopentomutase family. Mn(2+) is required as a cofactor.

Its subcellular location is the cytoplasm. It carries out the reaction 2-deoxy-alpha-D-ribose 1-phosphate = 2-deoxy-D-ribose 5-phosphate. The catalysed reaction is alpha-D-ribose 1-phosphate = D-ribose 5-phosphate. The protein operates within carbohydrate degradation; 2-deoxy-D-ribose 1-phosphate degradation; D-glyceraldehyde 3-phosphate and acetaldehyde from 2-deoxy-alpha-D-ribose 1-phosphate: step 1/2. Functionally, isomerase that catalyzes the conversion of deoxy-ribose 1-phosphate (dRib-1-P) and ribose 1-phosphate (Rib-1-P) to deoxy-ribose 5-phosphate (dRib-5-P) and ribose 5-phosphate (Rib-5-P), respectively. This Salmonella paratyphi C (strain RKS4594) protein is Phosphopentomutase.